A 336-amino-acid polypeptide reads, in one-letter code: tRNA N6-adenosine threonylcarbamoyltransferase (336 aa).

Residues H110 and H114 each coordinate Fe cation. Substrate is bound by residues 133 to 137, D166, G179, and N271; that span reads LVSGK. Position 300 (D300) interacts with Fe cation.

It belongs to the KAE1 / TsaD family. Fe(2+) is required as a cofactor.

The protein resides in the cytoplasm. It catalyses the reaction L-threonylcarbamoyladenylate + adenosine(37) in tRNA = N(6)-L-threonylcarbamoyladenosine(37) in tRNA + AMP + H(+). Functionally, required for the formation of a threonylcarbamoyl group on adenosine at position 37 (t(6)A37) in tRNAs that read codons beginning with adenine. Is involved in the transfer of the threonylcarbamoyl moiety of threonylcarbamoyl-AMP (TC-AMP) to the N6 group of A37, together with TsaE and TsaB. TsaD likely plays a direct catalytic role in this reaction. In Buchnera aphidicola subsp. Acyrthosiphon pisum (strain 5A), this protein is tRNA N6-adenosine threonylcarbamoyltransferase.